A 415-amino-acid polypeptide reads, in one-letter code: Squalene synthase 3 (415 aa).

The next 2 membrane-spanning stretches (helical) occupy residues 281–301 (AIFRFCAIPQIMAIGTLALCY) and 392–412 (LIIILFIILAILYAYLSSNLP).

The protein belongs to the phytoene/squalene synthase family. The cofactor is Mg(2+). Mn(2+) serves as cofactor.

The protein localises to the endoplasmic reticulum membrane. The catalysed reaction is 2 (2E,6E)-farnesyl diphosphate + NADH + H(+) = squalene + 2 diphosphate + NAD(+). It catalyses the reaction 2 (2E,6E)-farnesyl diphosphate + NADPH + H(+) = squalene + 2 diphosphate + NADP(+). The protein operates within terpene metabolism; lanosterol biosynthesis; lanosterol from farnesyl diphosphate: step 1/3. Component of the triterpene saponins (e.g. ginsenosides or panaxosides) and phytosterols biosynthetic pathways. Catalyzes the biosynthesis of squalene. In Panax ginseng (Korean ginseng), this protein is Squalene synthase 3.